The following is a 207-amino-acid chain: TM2 domain-containing protein 1 (207 aa).

An N-terminal signal peptide occupies residues 1-37 (MAAAWPSGPSAPEAVTARLVGVLWFVSVTTGPWGAVA). Residues 40 to 128 (AGGEESLKCE…YSYKVAVALS (89 aa)) are Extracellular-facing. N-linked (GlcNAc...) asparagine glycosylation is found at asparagine 72, asparagine 75, asparagine 87, and asparagine 96. Residues 118–166 (GYSYKVAVALSLFLGWLGADRFYLGYPALGLLKFCTVGFCGIGSLIDFI) form the TM2 domain. A helical membrane pass occupies residues 129-149 (LFLGWLGADRFYLGYPALGLL). Residues 150-153 (KFCT) are Cytoplasmic-facing. The helical transmembrane segment at 154-174 (VGFCGIGSLIDFILISMQIVG) threads the bilayer. The Extracellular portion of the chain corresponds to 175 to 207 (PSDGSSYIIDYYGTRLTRLSITNETFRKTQLYP). Residue asparagine 197 is glycosylated (N-linked (GlcNAc...) asparagine).

The protein belongs to the TM2 family. In terms of assembly, interacts with APP beta-APP42 (amyloid-beta protein 42). Post-translationally, N-glycosylated. As to expression, widely expressed.

The protein localises to the membrane. In terms of biological role, may participate in amyloid-beta-induced apoptosis via its interaction with beta-APP42. This is TM2 domain-containing protein 1 (TM2D1) from Homo sapiens (Human).